The sequence spans 77 residues: Small ribosomal subunit protein bS16 (77 aa).

This sequence belongs to the bacterial ribosomal protein bS16 family.

The polypeptide is Small ribosomal subunit protein bS16 (Helicobacter hepaticus (strain ATCC 51449 / 3B1)).